Here is a 333-residue protein sequence, read N- to C-terminus: Protoheme IX farnesyltransferase (333 aa).

The next 7 membrane-spanning stretches (helical) occupy residues 63–83, 109–129, 132–152, 160–180, 188–208, 245–265, and 292–312; these read LACT…LNCI, AAFI…VSGV, LAAG…TAIL, IVIG…AASG, WLFA…ALLL, GFGV…LIPF, and WSIF…LPMA.

It belongs to the UbiA prenyltransferase family. Protoheme IX farnesyltransferase subfamily.

Its subcellular location is the cell inner membrane. The enzyme catalyses heme b + (2E,6E)-farnesyl diphosphate + H2O = Fe(II)-heme o + diphosphate. Its pathway is porphyrin-containing compound metabolism; heme O biosynthesis; heme O from protoheme: step 1/1. Its function is as follows. Converts heme B (protoheme IX) to heme O by substitution of the vinyl group on carbon 2 of heme B porphyrin ring with a hydroxyethyl farnesyl side group. This chain is Protoheme IX farnesyltransferase, found in Prochlorococcus marinus (strain MIT 9303).